We begin with the raw amino-acid sequence, 681 residues long: UvrABC system protein C (681 aa).

Positions 16–95 constitute a GIY-YIG domain; the sequence is DSPGVYKFRD…IKEYDPRFNV (80 aa). A UVR domain is found at 208 to 243; sequence GTYIRRLERQMTDAAEEMEYEKAARLRDDIGALKKA. The segment at 650-681 is disordered; the sequence is EIMEDEEPGTTAGSSQEPVSAGTSDERRGQET. A compositionally biased stretch (polar residues) spans 660-672; the sequence is TAGSSQEPVSAGT.

This sequence belongs to the UvrC family. As to quaternary structure, interacts with UvrB in an incision complex.

The protein localises to the cytoplasm. Functionally, the UvrABC repair system catalyzes the recognition and processing of DNA lesions. UvrC both incises the 5' and 3' sides of the lesion. The N-terminal half is responsible for the 3' incision and the C-terminal half is responsible for the 5' incision. This is UvrABC system protein C from Streptomyces avermitilis (strain ATCC 31267 / DSM 46492 / JCM 5070 / NBRC 14893 / NCIMB 12804 / NRRL 8165 / MA-4680).